A 344-amino-acid chain; its full sequence is Fructose-1,6-bisphosphatase class 1 (344 aa).

Glu-107, Asp-129, Leu-131, and Asp-132 together coordinate Mg(2+). Substrate is bound by residues Asn-224, Tyr-252, and Lys-282. A Mg(2+)-binding site is contributed by Glu-288.

The protein belongs to the FBPase class 1 family. Homotetramer. It depends on Mg(2+) as a cofactor.

Its subcellular location is the cytoplasm. It carries out the reaction beta-D-fructose 1,6-bisphosphate + H2O = beta-D-fructose 6-phosphate + phosphate. It functions in the pathway carbohydrate biosynthesis; Calvin cycle. The sequence is that of Fructose-1,6-bisphosphatase class 1 from Synechococcus sp. (strain ATCC 27144 / PCC 6301 / SAUG 1402/1) (Anacystis nidulans).